The sequence spans 94 residues: Putative toxin RelE4 (94 aa).

This sequence belongs to the RelE toxin family.

Its function is as follows. Toxic component of a type II toxin-antitoxin (TA) system. Its cognate antitoxin is RelB4 (Potential). The protein is Putative toxin RelE4 (relE4) of Methanocaldococcus jannaschii (strain ATCC 43067 / DSM 2661 / JAL-1 / JCM 10045 / NBRC 100440) (Methanococcus jannaschii).